We begin with the raw amino-acid sequence, 261 residues long: Cytochrome c oxidase subunit 3 (261 aa).

The Mitochondrial matrix segment spans residues 1–15 (MTHQTHAYHMVNPSP). The chain crosses the membrane as a helical span at residues 16–34 (WPLTGALSALLMTSGLIMW). Topologically, residues 35–40 (FHYNSM) are mitochondrial intermembrane. A helical membrane pass occupies residues 41 to 66 (SLLTLGFTTNLLTMYQWWRDVIREGT). The Mitochondrial matrix segment spans residues 67-72 (FQGHHT). Residues 73–105 (PIVQKGLRYGMVLFIVSEVFFFAGFFWAFYHSS) form a helical membrane-spanning segment. The Mitochondrial intermembrane portion of the chain corresponds to 106 to 128 (LAPTPELGGCWPPTGIIPLNPLE). The chain crosses the membrane as a helical span at residues 129–152 (VPLLNTSVLLASGVSITWAHHSLM). Residues 153 to 155 (EGN) are Mitochondrial matrix-facing. The helical transmembrane segment at 156-183 (RKHMLQALFITISLGVYFTLLQASEYYE) threads the bilayer. Topologically, residues 184 to 190 (TSFTISD) are mitochondrial intermembrane. The helical transmembrane segment at 191-223 (GVYGSTFFMATGFHGLHVIIGSTFLIVCFLRQL) threads the bilayer. The Mitochondrial matrix portion of the chain corresponds to 224-232 (YYHFTSNHH). The helical transmembrane segment at 233–256 (FGFEAAAWYWHFVDVVWLFLYVSI) threads the bilayer. At 257–261 (YWWGS) the chain is on the mitochondrial intermembrane side.

It belongs to the cytochrome c oxidase subunit 3 family. As to quaternary structure, component of the cytochrome c oxidase (complex IV, CIV), a multisubunit enzyme composed of 14 subunits. The complex is composed of a catalytic core of 3 subunits MT-CO1, MT-CO2 and MT-CO3, encoded in the mitochondrial DNA, and 11 supernumerary subunits COX4I, COX5A, COX5B, COX6A, COX6B, COX6C, COX7A, COX7B, COX7C, COX8 and NDUFA4, which are encoded in the nuclear genome. The complex exists as a monomer or a dimer and forms supercomplexes (SCs) in the inner mitochondrial membrane with NADH-ubiquinone oxidoreductase (complex I, CI) and ubiquinol-cytochrome c oxidoreductase (cytochrome b-c1 complex, complex III, CIII), resulting in different assemblies (supercomplex SCI(1)III(2)IV(1) and megacomplex MCI(2)III(2)IV(2)).

It localises to the mitochondrion inner membrane. The enzyme catalyses 4 Fe(II)-[cytochrome c] + O2 + 8 H(+)(in) = 4 Fe(III)-[cytochrome c] + 2 H2O + 4 H(+)(out). In terms of biological role, component of the cytochrome c oxidase, the last enzyme in the mitochondrial electron transport chain which drives oxidative phosphorylation. The respiratory chain contains 3 multisubunit complexes succinate dehydrogenase (complex II, CII), ubiquinol-cytochrome c oxidoreductase (cytochrome b-c1 complex, complex III, CIII) and cytochrome c oxidase (complex IV, CIV), that cooperate to transfer electrons derived from NADH and succinate to molecular oxygen, creating an electrochemical gradient over the inner membrane that drives transmembrane transport and the ATP synthase. Cytochrome c oxidase is the component of the respiratory chain that catalyzes the reduction of oxygen to water. Electrons originating from reduced cytochrome c in the intermembrane space (IMS) are transferred via the dinuclear copper A center (CU(A)) of subunit 2 and heme A of subunit 1 to the active site in subunit 1, a binuclear center (BNC) formed by heme A3 and copper B (CU(B)). The BNC reduces molecular oxygen to 2 water molecules using 4 electrons from cytochrome c in the IMS and 4 protons from the mitochondrial matrix. This chain is Cytochrome c oxidase subunit 3 (MT-CO3), found in Canis lupus (Gray wolf).